The sequence spans 64 residues: Defensin-like protein 123 (64 aa).

4 disulfides stabilise this stretch: Cys-19/Cys-62, Cys-29/Cys-49, Cys-34/Cys-56, and Cys-38/Cys-58.

This sequence belongs to the DEFL family.

The polypeptide is Defensin-like protein 123 (Arabidopsis thaliana (Mouse-ear cress)).